A 396-amino-acid polypeptide reads, in one-letter code: MSDYNIFTSESVSEGHPDKLADQISDAVLDAILTDDPHARVACETMVKTGVAIVGGEITTSAWVDLEDLVRGVIKDIDYTSSEVGYDGDTCGVINIIGKQSVDIAQGVDRQKPEDQGAGDQGLMFGYASNETDVLMPAPITFSHRLVQRQAEARKSGLLPWLRPDAKSQVTCRYENGKVVGIDAVVLSTQHDPDVTQADLKEAVMELIVKHTLPAELLHKDTQFHINPTGKFVIGGPVGDCGLTGRKIIVDTYGGMARHGGGAFSGKDPSKVDRSAAYAGRYVAKNIVAAGLAEKCEIQVSYAIGVAQPTSISLNTFGTGKISDDKIIDLVRAHFDLRPYAITNMLDLLHPMYRATAAYGHFGRDPYEMTVGGKTFTAFPWEKTDRAAALKDAAGI.

Histidine 16 lines the ATP pocket. Aspartate 18 serves as a coordination point for Mg(2+). Glutamate 44 lines the K(+) pocket. L-methionine contacts are provided by glutamate 57 and glutamine 100. The tract at residues 100 to 110 (QSVDIAQGVDR) is flexible loop. ATP contacts are provided by residues 165–167 (DAK), 231–232 (KF), aspartate 240, 246–247 (RK), alanine 263, and lysine 267. Residue aspartate 240 coordinates L-methionine. Lysine 271 serves as a coordination point for L-methionine.

The protein belongs to the AdoMet synthase family. As to quaternary structure, homotetramer; dimer of dimers. It depends on Mg(2+) as a cofactor. The cofactor is K(+).

Its subcellular location is the cytoplasm. The enzyme catalyses L-methionine + ATP + H2O = S-adenosyl-L-methionine + phosphate + diphosphate. It participates in amino-acid biosynthesis; S-adenosyl-L-methionine biosynthesis; S-adenosyl-L-methionine from L-methionine: step 1/1. Catalyzes the formation of S-adenosylmethionine (AdoMet) from methionine and ATP. The overall synthetic reaction is composed of two sequential steps, AdoMet formation and the subsequent tripolyphosphate hydrolysis which occurs prior to release of AdoMet from the enzyme. In Marinobacter nauticus (strain ATCC 700491 / DSM 11845 / VT8) (Marinobacter aquaeolei), this protein is S-adenosylmethionine synthase.